A 188-amino-acid polypeptide reads, in one-letter code: Elongation factor P (188 aa).

Belongs to the elongation factor P family.

The protein resides in the cytoplasm. Its pathway is protein biosynthesis; polypeptide chain elongation. Its function is as follows. Involved in peptide bond synthesis. Stimulates efficient translation and peptide-bond synthesis on native or reconstituted 70S ribosomes in vitro. Probably functions indirectly by altering the affinity of the ribosome for aminoacyl-tRNA, thus increasing their reactivity as acceptors for peptidyl transferase. This chain is Elongation factor P (efp), found in Rickettsia conorii (strain ATCC VR-613 / Malish 7).